The primary structure comprises 57 residues: Large ribosomal subunit protein bL32 (57 aa).

The disordered stretch occupies residues 1–23 (MAVPKKKTSKSKRDKRRATWRHK).

The protein belongs to the bacterial ribosomal protein bL32 family.

The polypeptide is Large ribosomal subunit protein bL32 (Nostoc sp. (strain PCC 7120 / SAG 25.82 / UTEX 2576)).